The following is an 818-amino-acid chain: Dapper 1-A (818 aa).

Residues 1 to 10 show a composition bias toward pro residues; that stretch reads MKPIPSPEPP. Disordered regions lie at residues 1 to 30, 60 to 80, 122 to 144, 455 to 486, and 510 to 530; these read MKPI…WERH, VLSP…PRSD, IDSE…LSDG, NVTP…SALL, and ESSS…SSSQ. The tract at residues 1–337 is interaction with tcf7l1-A; sequence MKPIPSPEPP…PVRTNKPRTS (337 aa). Over residues 21–30 the composition is skewed to basic and acidic residues; it reads DKGEAEWERH. The stretch at 79–130 forms a coiled coil; it reads SDEQKLLEENISLLKKQLNCLRKRDAGLLSQLHELDKQINDLKIDSEKTEET. Residues 122-132 are compositionally biased toward basic and acidic residues; that stretch reads IDSEKTEETDS. Residues 455–485 are compositionally biased toward polar residues; sequence NVTPNAPANLPNASSSVCNGSPRESTQNSAL. Residues 512-524 are compositionally biased toward basic and acidic residues; the sequence is SSFEERPPLDFKS. A PDZ-binding motif is present at residues 815-818; that stretch reads MTTV.

This sequence belongs to the dapper family. In terms of assembly, interacts with dbf4 and tcf7l1-A. Interacts with dvl2/dsh via the C-terminus. As to expression, expressed in the animal and dorsal marginal regions at late blastula and early gastrula stages. Expressed predominantly in the anterior neural plate at neurulation. Expressed mainly in the ectodermal placodes, including the eye anlagen and the otic vesicle, at later stages of development.

The protein localises to the cytoplasm. It is found in the nucleus. Involved in regulation of intracellular signaling pathways during development. Specifically thought to play a role in canonical and/or non-canonical Wnt signaling pathways through interaction with DSH (Dishevelled) family proteins. Binds to dvl2/dsh and impedes the degradation of beta-catenin (ctnnb1-A and possibly ctnnb1-B), thereby enhancing the transcriptional activation of target genes of the Wnt signaling pathway. Also promotes catenin delta/ctnnd1 stability which in turn promotes zbtb33/kaiso sequestration and thus is involved in the regulation of zbtb33/kaiso-mediated transcriptional repression. May also bind to and directly stimulate the transcriptional activity of tcf7l1-A. Required for eye development and neural patterning. The polypeptide is Dapper 1-A (dact1-a) (Xenopus laevis (African clawed frog)).